The following is a 258-amino-acid chain: Imidazole glycerol phosphate synthase subunit HisF (258 aa).

Catalysis depends on residues Asp11 and Asp130.

It belongs to the HisA/HisF family. As to quaternary structure, heterodimer of HisH and HisF.

The protein localises to the cytoplasm. It catalyses the reaction 5-[(5-phospho-1-deoxy-D-ribulos-1-ylimino)methylamino]-1-(5-phospho-beta-D-ribosyl)imidazole-4-carboxamide + L-glutamine = D-erythro-1-(imidazol-4-yl)glycerol 3-phosphate + 5-amino-1-(5-phospho-beta-D-ribosyl)imidazole-4-carboxamide + L-glutamate + H(+). It functions in the pathway amino-acid biosynthesis; L-histidine biosynthesis; L-histidine from 5-phospho-alpha-D-ribose 1-diphosphate: step 5/9. Functionally, IGPS catalyzes the conversion of PRFAR and glutamine to IGP, AICAR and glutamate. The HisF subunit catalyzes the cyclization activity that produces IGP and AICAR from PRFAR using the ammonia provided by the HisH subunit. This chain is Imidazole glycerol phosphate synthase subunit HisF, found in Yersinia pseudotuberculosis serotype IB (strain PB1/+).